Reading from the N-terminus, the 248-residue chain is DNA repair protein RecO (248 aa).

It belongs to the RecO family.

In terms of biological role, involved in DNA repair and RecF pathway recombination. The chain is DNA repair protein RecO from Streptomyces griseus subsp. griseus (strain JCM 4626 / CBS 651.72 / NBRC 13350 / KCC S-0626 / ISP 5235).